A 250-amino-acid polypeptide reads, in one-letter code: Aquaporin TIP1-1 (250 aa).

The next 2 membrane-spanning stretches (helical) occupy residues 24 to 44 (FAEF…GMAF) and 56 to 76 (AGLI…VSVG). Residues 85-87 (NPA) carry the NPA 1 motif. A run of 3 helical transmembrane segments spans residues 104–126 (LLYW…FSTG), 143–163 (ALVL…ATAV), and 172–192 (TIAP…GGAF). The NPA 2 signature appears at 198 to 200 (NPA). The chain crosses the membrane as a helical span at residues 218 to 238 (YWVGPLIGGGLAGVIYELLFI).

Belongs to the MIP/aquaporin (TC 1.A.8) family. TIP (TC 1.A.8.10) subfamily. As to expression, expressed in roots, shoots, leaves, tassels, ears and embryos. Expressed in meristems and zones of cell enlargement: tips of primary and lateral roots, leaf primordia, and male and female inflorescence meristems. Highly expressed in the root epidermis and endodermis, parenchyma cells surrounding mature xylem vessels in the root and the stem, phloem companion cells and a ring of cells around the phloem strand in the stem and the leaf sheath, and the basal endosperm transfer cells in developing kernels.

Its subcellular location is the vacuole membrane. In terms of biological role, water channel required to facilitate the transport of water across cell membrane. May support the rapid influx of water into vacuoles during cell expansion, permit osmotic equilibration between the cytosol and the vacuolar content and rapid transcellular water flow through living cells. Its function is impaired by Hg(2+). This Zea mays (Maize) protein is Aquaporin TIP1-1 (TIP1-1).